The sequence spans 204 residues: MSSILLLTSSPRAESLSTPIAVELAEKLKNQNPGSFLVRRDLAASPLPHIDDLFTGAIRKPAEARTAEEVAAVKTSDELVNELFAADTIVISTGLINFNIYSSLKTWIDNVARAGLTFKYTESGPVGLLTGKKVYVVLTSGGVYSQGPAAPLNHAVPYLKSVFGFLGITDIETIYVEGLAFGPEAAEKAIDAAKMRVQEIALAA.

FMN-binding positions include Ser10, 15–17, and 139–142; these read SLS and TSGG.

Belongs to the azoreductase type 1 family. Homodimer. FMN is required as a cofactor.

The enzyme catalyses 2 a quinone + NADH + H(+) = 2 a 1,4-benzosemiquinone + NAD(+). It catalyses the reaction N,N-dimethyl-1,4-phenylenediamine + anthranilate + 2 NAD(+) = 2-(4-dimethylaminophenyl)diazenylbenzoate + 2 NADH + 2 H(+). Its function is as follows. Quinone reductase that provides resistance to thiol-specific stress caused by electrophilic quinones. Also exhibits azoreductase activity. Catalyzes the reductive cleavage of the azo bond in aromatic azo compounds to the corresponding amines. In Rhizobium leguminosarum bv. trifolii (strain WSM2304), this protein is FMN-dependent NADH:quinone oxidoreductase.